A 468-amino-acid chain; its full sequence is H(+)/Cl(-) exchange transporter ClcA (468 aa).

Residues 1–30 (MSTRETFKISLLAKMPKDVINQFLSKDKTP) are Cytoplasmic-facing. A helical transmembrane segment spans residues 31–67 (FSVLFLSLLVGILAGLVGTYFEQAVHLVSETRTDWLK). Residues 68–74 (SEIGSFL) are Periplasmic-facing. Residues 75-98 (PLWLAAFLISAFLAFIGYFLVHRF) form a helical membrane-spanning segment. The Selectivity filter part_1 motif lies at 104 to 108 (GSGIP). S105 contacts chloride. The segment at residues 107 to 114 (IPEIEGAM) is an intramembrane region (helical). Residues 115–121 (DGMRPVR) are Cytoplasmic-facing. A run of 2 helical transmembrane segments spans residues 122–139 (WWRV…ALGS) and 146–164 (EGPT…SDIF). The short motif at 144–148 (GREGP) is the Selectivity filter part_2 element. Topologically, residues 165-174 (RVKNEDTRHS) are cytoplasmic. Intramembrane regions (helical) lie at residues 175–187 (LLAA…LAAA) and 191–199 (PLAGIMFVI). The Cytoplasmic segment spans residues 200-212 (EEMRPQFRYTLIS). A helical membrane pass occupies residues 213 to 230 (VRAVIISAVAANIVFRVI). Residues 231–250 (NGQDAVITMPQYDAPELSTL) lie on the Periplasmic side of the membrane. Residues 251–279 (GLFLLLGALFGVFGVLFNYLITLAQDLFV) form a helical membrane-spanning segment. The Cytoplasmic segment spans residues 280–285 (KFHRND). Residues 286 to 307 (RKRYLLTGSMIGGCFGLLLLYV) form a helical membrane-spanning segment. Residues 308–327 (PELTGGGISLIPTITNGGYG) lie on the Periplasmic side of the membrane. Transmembrane regions (helical) follow at residues 328–347 (AGIL…LCFG) and 353–374 (GIFA…LIAK). A Selectivity filter part_3 motif is present at residues 353 to 357 (GIFAP). 2 residues coordinate chloride: I354 and F355. Residues 375–384 (VWFPELNIEP) lie on the Periplasmic side of the membrane. Positions 385 to 399 (GMFAIAGMGALFAAT) form an intramembrane region, helical. The note=Loop between two helices intramembrane region spans 400–402 (VRA). The helical intramembrane region spans 403–414 (PITGILLVIEMT). Positions 415-419 (NNYHL) form an intramembrane region, note=Loop between two helices. The chain crosses the membrane as a helical span at residues 420 to 436 (ILPLIITSLGAVIFAQL). The Cytoplasmic segment spans residues 437-468 (LGGQPIYSQLLHRTLKNQKLQQQDLPPQSPNS). A chloride-binding site is contributed by Y443.

Belongs to the chloride channel (TC 2.A.49) family. ClcA subfamily. Homodimer.

Its subcellular location is the cell inner membrane. It catalyses the reaction 2 chloride(in) + H(+)(out) = 2 chloride(out) + H(+)(in). Its function is as follows. Proton-coupled chloride transporter. Functions as antiport system and exchanges two chloride ions for 1 proton. Probably acts as an electrical shunt for an outwardly-directed proton pump that is linked to amino acid decarboxylation, as part of the extreme acid resistance (XAR) response. In Vibrio cholerae serotype O1 (strain ATCC 39541 / Classical Ogawa 395 / O395), this protein is H(+)/Cl(-) exchange transporter ClcA.